The chain runs to 1180 residues: RecBCD enzyme subunit RecB (1180 aa).

A DNA-binding and helicase activity, interacts with RecC region spans residues 1-852 (MITTIPKSIN…QSGKNHISTK (852 aa)). In terms of domain architecture, UvrD-like helicase ATP-binding spans 3–448 (TTIPKSINVT…YFLDTNWRSS (446 aa)). ATP is bound at residue 24–31 (ASAGTGKT). The region spanning 478–745 (SSRINKTTKF…KIVSIHKSKG (268 aa)) is the UvrD-like helicase C-terminal domain. The interval 905–1180 (NYNFTSYSQL…EIIKKLEQIF (276 aa)) is nuclease activity, interacts with RecD and RecA. Mg(2+) contacts are provided by histidine 964, aspartate 1075, and aspartate 1088. Aspartate 1088 functions as the For nuclease activity in the catalytic mechanism.

This sequence belongs to the helicase family. UvrD subfamily. Heterotrimer of RecB, RecC and RecD. All subunits contribute to DNA-binding. Interacts with RecA. Mg(2+) serves as cofactor.

The catalysed reaction is Exonucleolytic cleavage (in the presence of ATP) in either 5'- to 3'- or 3'- to 5'-direction to yield 5'-phosphooligonucleotides.. It catalyses the reaction Couples ATP hydrolysis with the unwinding of duplex DNA by translocating in the 3'-5' direction.. It carries out the reaction ATP + H2O = ADP + phosphate + H(+). Functionally, a helicase/nuclease that prepares dsDNA breaks (DSB) for recombinational DNA repair. Binds to DSBs and unwinds DNA via a highly rapid and processive ATP-dependent bidirectional helicase activity. Unwinds dsDNA until it encounters a Chi (crossover hotspot instigator) sequence from the 3' direction. Cuts ssDNA a few nucleotides 3' to the Chi site. The properties and activities of the enzyme are changed at Chi. The Chi-altered holoenzyme produces a long 3'-ssDNA overhang and facilitates RecA-binding to the ssDNA for homologous DNA recombination and repair. Holoenzyme degrades any linearized DNA that is unable to undergo homologous recombination. In the holoenzyme this subunit contributes ATPase, 3'-5' helicase, exonuclease activity and loads RecA onto ssDNA. This Buchnera aphidicola subsp. Baizongia pistaciae (strain Bp) protein is RecBCD enzyme subunit RecB.